The following is a 252-amino-acid chain: MPAPTALLRKSDEPLSAEEPSLTFSSDAQASGQGEAPSPIPTESAQHSDMRIDEESRPVFTPITDAGTVLRVETRKVPVPPHRMTPLKANWPKIYPPLVEHLKLQVRMNIKNRAVELRTSKFTTDTGALQKGEDFVKAFTLGFDVDDAIALLRLDDLYIRSFEIRDVKASLNGEHLSRAIGRIAGKDGKTKFAIENASRTRVVLQGTKVTILGRFRDLGIAQEAIVSLILGSPPGKVYGNLRKVASRMKERF.

The disordered stretch occupies residues 1–57 (MPAPTALLRKSDEPLSAEEPSLTFSSDAQASGQGEAPSPIPTESAQHSDMRIDEESR). Residues 22 to 32 (LTFSSDAQASG) show a composition bias toward polar residues. Residues 46 to 57 (QHSDMRIDEESR) show a composition bias toward basic and acidic residues. The KH domain maps to 173–225 (GEHLSRAIGRIAGKDGKTKFAIENASRTRVVLQGTKVTILGRFRDLGIAQEAI).

Belongs to the PNO1 family. In terms of assembly, component of the small ribosomal subunit, ribosomal RNA processing complex (SSU RRP complex).

It localises to the cytoplasm. The protein resides in the nucleus. Its subcellular location is the nucleolus. Functionally, required for small ribosomal subunit (SSU) synthesis. Has a role in the processing of early nucleolar and late cytoplasmic pre-RNA species. The chain is Pre-rRNA-processing protein pno1 (pno1) from Aspergillus fumigatus (strain ATCC MYA-4609 / CBS 101355 / FGSC A1100 / Af293) (Neosartorya fumigata).